The chain runs to 212 residues: Small ribosomal subunit protein eS1 (212 aa).

Belongs to the eukaryotic ribosomal protein eS1 family.

The chain is Small ribosomal subunit protein eS1 from Haloquadratum walsbyi (strain DSM 16790 / HBSQ001).